A 665-amino-acid chain; its full sequence is Auxin response factor 1 (665 aa).

Positions 124–226 (FCKTLTASDT…ELRVGVRRHM (103 aa)) form a DNA-binding region, TF-B3. Disordered stretches follow at residues 356–408 (VANS…SVPL), 496–542 (PVPS…RQIR), and 645–665 (KADA…AGSR). Composition is skewed to polar residues over residues 497-519 (VPSN…SDIP), 530-542 (LRSP…RQIR), and 651-665 (NGNT…AGSR). One can recognise a PB1 domain in the interval 542–635 (RSCTKVHMQG…EVKKLSPKNK (94 aa)).

This sequence belongs to the ARF family. In terms of assembly, homodimers and heterodimers. Interacts with the auxin-responsive proteins IAA12, IAA13, IAA17 and with ARF2. Binds to RIN13 in the nucleus. In terms of tissue distribution, expressed in the whole plant.

Its subcellular location is the nucleus. The protein localises to the cytoplasm. Its function is as follows. Auxin response factors (ARFs) are transcriptional factors that bind specifically to the DNA sequence 5'-TGTCTC-3' found in the auxin-responsive promoter elements (AuxREs). Seems to act as transcriptional repressor. Formation of heterodimers with Aux/IAA proteins may alter their ability to modulate early auxin response genes expression. Promotes flowering, stamen development, floral organ abscission and fruit dehiscence. Acts as a repressor of IAA2, IAA3 and IAA7. Together with RIN13, promotes leaf senescence and cell death. The chain is Auxin response factor 1 from Arabidopsis thaliana (Mouse-ear cress).